The primary structure comprises 386 residues: Probable mannan endo-1,4-beta-mannosidase A (386 aa).

Positions 1-21 are cleaved as a signal peptide; it reads MKLNPSLLTAAGLVSAQLASA. Substrate contacts are provided by tryptophan 95 and asparagine 207. The Proton donor role is filled by glutamate 208. Residue tyrosine 283 coordinates substrate. Glutamate 316 serves as the catalytic Nucleophile. Asparagine 336 carries N-linked (GlcNAc...) asparagine glycosylation. Tryptophan 346 lines the substrate pocket.

It belongs to the glycosyl hydrolase 5 (cellulase A) family.

Its subcellular location is the secreted. The catalysed reaction is Random hydrolysis of (1-&gt;4)-beta-D-mannosidic linkages in mannans, galactomannans and glucomannans.. Its function is as follows. Endo-1,4-mannanase, a crucial enzyme for depolymerization of seed galactomannans and wood galactoglucomannans. The polypeptide is Probable mannan endo-1,4-beta-mannosidase A (manA) (Aspergillus flavus (strain ATCC 200026 / FGSC A1120 / IAM 13836 / NRRL 3357 / JCM 12722 / SRRC 167)).